A 336-amino-acid chain; its full sequence is Holliday junction branch migration complex subunit RuvB (336 aa).

Residues 4-184 (ADRLISAGAT…FGIVQRLEFY (181 aa)) are large ATPase domain (RuvB-L). ATP-binding positions include Ile23, Arg24, Gly65, Lys68, Thr69, Thr70, 131–133 (EDY), Arg174, Tyr184, and Arg221. Thr69 contacts Mg(2+). Residues 185–255 (QVPDLQHIVG…IAAQALDMLN (71 aa)) are small ATPAse domain (RuvB-S). Residues 258-336 (AEGFDYMDRK…HFGITPPEMP (79 aa)) form a head domain (RuvB-H) region. DNA is bound by residues Arg294, Arg313, and Arg318.

Belongs to the RuvB family. As to quaternary structure, homohexamer. Forms an RuvA(8)-RuvB(12)-Holliday junction (HJ) complex. HJ DNA is sandwiched between 2 RuvA tetramers; dsDNA enters through RuvA and exits via RuvB. An RuvB hexamer assembles on each DNA strand where it exits the tetramer. Each RuvB hexamer is contacted by two RuvA subunits (via domain III) on 2 adjacent RuvB subunits; this complex drives branch migration. In the full resolvosome a probable DNA-RuvA(4)-RuvB(12)-RuvC(2) complex forms which resolves the HJ.

The protein localises to the cytoplasm. It catalyses the reaction ATP + H2O = ADP + phosphate + H(+). Functionally, the RuvA-RuvB-RuvC complex processes Holliday junction (HJ) DNA during genetic recombination and DNA repair, while the RuvA-RuvB complex plays an important role in the rescue of blocked DNA replication forks via replication fork reversal (RFR). RuvA specifically binds to HJ cruciform DNA, conferring on it an open structure. The RuvB hexamer acts as an ATP-dependent pump, pulling dsDNA into and through the RuvAB complex. RuvB forms 2 homohexamers on either side of HJ DNA bound by 1 or 2 RuvA tetramers; 4 subunits per hexamer contact DNA at a time. Coordinated motions by a converter formed by DNA-disengaged RuvB subunits stimulates ATP hydrolysis and nucleotide exchange. Immobilization of the converter enables RuvB to convert the ATP-contained energy into a lever motion, pulling 2 nucleotides of DNA out of the RuvA tetramer per ATP hydrolyzed, thus driving DNA branch migration. The RuvB motors rotate together with the DNA substrate, which together with the progressing nucleotide cycle form the mechanistic basis for DNA recombination by continuous HJ branch migration. Branch migration allows RuvC to scan DNA until it finds its consensus sequence, where it cleaves and resolves cruciform DNA. In Salmonella choleraesuis (strain SC-B67), this protein is Holliday junction branch migration complex subunit RuvB.